Reading from the N-terminus, the 79-residue chain is Acyl carrier protein (79 aa).

Residues 2-77 (STIEERVKKI…QAIDYVKSHV (76 aa)) form the Carrier domain. At serine 37 the chain carries O-(pantetheine 4'-phosphoryl)serine.

The protein belongs to the acyl carrier protein (ACP) family. Post-translationally, 4'-phosphopantetheine is transferred from CoA to a specific serine of apo-ACP by AcpS. This modification is essential for activity because fatty acids are bound in thioester linkage to the sulfhydryl of the prosthetic group.

It is found in the cytoplasm. The protein operates within lipid metabolism; fatty acid biosynthesis. In terms of biological role, carrier of the growing fatty acid chain in fatty acid biosynthesis. In Xanthomonas oryzae pv. oryzae (strain MAFF 311018), this protein is Acyl carrier protein.